The chain runs to 263 residues: 3-methyl-2-oxobutanoate hydroxymethyltransferase (263 aa).

Mg(2+)-binding residues include aspartate 45 and aspartate 84. Residues 45 to 46 (DS), aspartate 84, and lysine 112 contribute to the 3-methyl-2-oxobutanoate site. Glutamate 114 is a Mg(2+) binding site. The active-site Proton acceptor is the glutamate 181.

It belongs to the PanB family. As to quaternary structure, homodecamer; pentamer of dimers. Mg(2+) is required as a cofactor.

It is found in the cytoplasm. It carries out the reaction 3-methyl-2-oxobutanoate + (6R)-5,10-methylene-5,6,7,8-tetrahydrofolate + H2O = 2-dehydropantoate + (6S)-5,6,7,8-tetrahydrofolate. The protein operates within cofactor biosynthesis; (R)-pantothenate biosynthesis; (R)-pantoate from 3-methyl-2-oxobutanoate: step 1/2. In terms of biological role, catalyzes the reversible reaction in which hydroxymethyl group from 5,10-methylenetetrahydrofolate is transferred onto alpha-ketoisovalerate to form ketopantoate. The polypeptide is 3-methyl-2-oxobutanoate hydroxymethyltransferase (Chromohalobacter salexigens (strain ATCC BAA-138 / DSM 3043 / CIP 106854 / NCIMB 13768 / 1H11)).